The following is a 172-amino-acid chain: Lipoprotein signal peptidase (172 aa).

A run of 3 helical transmembrane segments spans residues 10–30 (LIWL…KAWV), 68–88 (WQLW…AFWL), and 98–118 (SALP…DRLM). Active-site residues include Asp-124 and Asp-142. Residues 138–158 (FNIADSAIVGGAIGIAVFGLF) form a helical membrane-spanning segment.

It belongs to the peptidase A8 family.

The protein resides in the cell inner membrane. It catalyses the reaction Release of signal peptides from bacterial membrane prolipoproteins. Hydrolyzes -Xaa-Yaa-Zaa-|-(S,diacylglyceryl)Cys-, in which Xaa is hydrophobic (preferably Leu), and Yaa (Ala or Ser) and Zaa (Gly or Ala) have small, neutral side chains.. It participates in protein modification; lipoprotein biosynthesis (signal peptide cleavage). Its function is as follows. This protein specifically catalyzes the removal of signal peptides from prolipoproteins. The polypeptide is Lipoprotein signal peptidase (Xanthomonas euvesicatoria pv. vesicatoria (strain 85-10) (Xanthomonas campestris pv. vesicatoria)).